Consider the following 261-residue polypeptide: Glucosamine-6-phosphate deaminase (261 aa).

The Proton acceptor; for enolization step role is filled by D67. The For ring-opening step role is filled by D136. Catalysis depends on H138, which acts as the Proton acceptor; for ring-opening step. Catalysis depends on E143, which acts as the For ring-opening step.

It belongs to the glucosamine/galactosamine-6-phosphate isomerase family. NagB subfamily.

The enzyme catalyses alpha-D-glucosamine 6-phosphate + H2O = beta-D-fructose 6-phosphate + NH4(+). Its pathway is amino-sugar metabolism; N-acetylneuraminate degradation; D-fructose 6-phosphate from N-acetylneuraminate: step 5/5. Functionally, catalyzes the reversible isomerization-deamination of glucosamine 6-phosphate (GlcN6P) to form fructose 6-phosphate (Fru6P) and ammonium ion. This chain is Glucosamine-6-phosphate deaminase, found in Streptomyces coelicolor (strain ATCC BAA-471 / A3(2) / M145).